A 57-amino-acid chain; its full sequence is Large ribosomal subunit protein bL32 (57 aa).

This sequence belongs to the bacterial ribosomal protein bL32 family.

The protein is Large ribosomal subunit protein bL32 of Shouchella clausii (strain KSM-K16) (Alkalihalobacillus clausii).